Here is a 112-residue protein sequence, read N- to C-terminus: Cell cycle protein GpsB (112 aa).

Positions 42–77 (YQKMADMNNEVVKLSEENHKLKKELEELRLRVATSR) form a coiled coil. The tract at residues 74 to 96 (ATSRPQDNKNFSSNNSSSASNNV) is disordered. Over residues 81-95 (NKNFSSNNSSSASNN) the composition is skewed to low complexity.

This sequence belongs to the GpsB family. In terms of assembly, forms polymers through the coiled coil domains. Interacts with PBP1, MreC and EzrA.

The protein resides in the cytoplasm. Divisome component that associates with the complex late in its assembly, after the Z-ring is formed, and is dependent on DivIC and PBP2B for its recruitment to the divisome. Together with EzrA, is a key component of the system that regulates PBP1 localization during cell cycle progression. Its main role could be the removal of PBP1 from the cell pole after pole maturation is completed. Also contributes to the recruitment of PBP1 to the division complex. Not essential for septum formation. This chain is Cell cycle protein GpsB, found in Staphylococcus epidermidis (strain ATCC 12228 / FDA PCI 1200).